We begin with the raw amino-acid sequence, 74 residues long: DNA-directed RNA polymerase subunit omega (74 aa).

It belongs to the RNA polymerase subunit omega family. The RNAP catalytic core consists of 2 alpha, 1 beta, 1 beta' and 1 omega subunit. When a sigma factor is associated with the core the holoenzyme is formed, which can initiate transcription.

It carries out the reaction RNA(n) + a ribonucleoside 5'-triphosphate = RNA(n+1) + diphosphate. In terms of biological role, promotes RNA polymerase assembly. Latches the N- and C-terminal regions of the beta' subunit thereby facilitating its interaction with the beta and alpha subunits. In Hydrogenovibrio crunogenus (strain DSM 25203 / XCL-2) (Thiomicrospira crunogena), this protein is DNA-directed RNA polymerase subunit omega.